A 269-amino-acid chain; its full sequence is uncharacterized protein (269 aa).

The tract at residues 1–22 is disordered; that stretch reads MSANGTDQQSDHGHSTSNNKDC.

This is an uncharacterized protein from Gallus gallus (Chicken).